Here is a 489-residue protein sequence, read N- to C-terminus: N-succinylglutamate 5-semialdehyde dehydrogenase (489 aa).

223-228 (GSASTG) contributes to the NAD(+) binding site. Catalysis depends on residues E246 and C280.

It belongs to the aldehyde dehydrogenase family. AstD subfamily.

It carries out the reaction N-succinyl-L-glutamate 5-semialdehyde + NAD(+) + H2O = N-succinyl-L-glutamate + NADH + 2 H(+). It participates in amino-acid degradation; L-arginine degradation via AST pathway; L-glutamate and succinate from L-arginine: step 4/5. Functionally, catalyzes the NAD-dependent reduction of succinylglutamate semialdehyde into succinylglutamate. This is N-succinylglutamate 5-semialdehyde dehydrogenase from Acinetobacter baylyi (strain ATCC 33305 / BD413 / ADP1).